The following is a 77-amino-acid chain: Omega-conotoxin TxVII (77 aa).

Positions 1 to 22 (MKLTCMMIVAVLFLTAWTFATA) are cleaved as a signal peptide. Residues 23 to 49 (DDSGNGLENLFPKAHHEMKNPEASKLN) constitute a propeptide that is removed on maturation. Cystine bridges form between C52-C67, C59-C71, and C66-C75.

As to expression, expressed by the venom duct.

It localises to the secreted. Functionally, omega-conotoxins act at presynaptic membranes, they bind and block voltage-gated calcium channels (Cav). Specifically acts on L-type channels. It blocks molluscan dihydropyridine-sensitive calcium channels. This chain is Omega-conotoxin TxVII, found in Conus textile (Cloth-of-gold cone).